A 448-amino-acid polypeptide reads, in one-letter code: MSRMFGTDGVRGIANEELTAEVAYNLGKAGAYVLTEGTHKPKIVVGMDTRISGHMLESALVAGILSMGGEAICLGIVPTPAVAHLTRKYGADAGVVISASHNPVEYNGIKFFDKGGYKLPDELEDRIQSVIENNFEGVPCPTGEDIGEKTIIDDAIKDYIEFAKGTIKGDLKGLRVALDCANGASYKASVETFKDLGAEVYVINNEPNGKNINKDCGSTHMESLRKYVVEKGCDFGLAFDGDADRCLAVDEKGNIVNGDFMMAICAKYMKDHKKLDKNTMVVTVMSNIGLFIAMEREKIDLIKTKVGDRYVLEEMLKEGYKIGGEQSGHIIFLDYNTTGDGLVTALQLSSIIKDSNKKLSELASIMKELPQVLLNAKVTNNMKNIYIEDEEIAGEIKKIEEQMEGKGRVLIRPSGTEPLVRVMLEGENQEEIDKIAHDLVKLIEKKTK.

Serine 100 serves as the catalytic Phosphoserine intermediate. Positions 100, 240, 242, and 244 each coordinate Mg(2+). Position 100 is a phosphoserine (serine 100).

The protein belongs to the phosphohexose mutase family. The cofactor is Mg(2+). Activated by phosphorylation.

It catalyses the reaction alpha-D-glucosamine 1-phosphate = D-glucosamine 6-phosphate. Functionally, catalyzes the conversion of glucosamine-6-phosphate to glucosamine-1-phosphate. The sequence is that of Phosphoglucosamine mutase from Clostridium tetani (strain Massachusetts / E88).